Here is a 372-residue protein sequence, read N- to C-terminus: Citrate synthase 2 (372 aa).

The active site involves histidine 257. A Phosphoserine modification is found at serine 284. Aspartate 308 is a catalytic residue.

Belongs to the citrate synthase family. As to quaternary structure, homodimer.

The catalysed reaction is oxaloacetate + acetyl-CoA + H2O = citrate + CoA + H(+). It functions in the pathway carbohydrate metabolism; tricarboxylic acid cycle; isocitrate from oxaloacetate: step 1/2. Might regulate the synthesis and function of enzymes involved in later enzymatic steps of Krebs cycle. Loss in activity results in sporulation defect. This chain is Citrate synthase 2 (citZ), found in Bacillus subtilis (strain 168).